The sequence spans 238 residues: Phosphoribosylaminoimidazole-succinocarboxamide synthase (238 aa).

The protein belongs to the SAICAR synthetase family.

It catalyses the reaction 5-amino-1-(5-phospho-D-ribosyl)imidazole-4-carboxylate + L-aspartate + ATP = (2S)-2-[5-amino-1-(5-phospho-beta-D-ribosyl)imidazole-4-carboxamido]succinate + ADP + phosphate + 2 H(+). Its pathway is purine metabolism; IMP biosynthesis via de novo pathway; 5-amino-1-(5-phospho-D-ribosyl)imidazole-4-carboxamide from 5-amino-1-(5-phospho-D-ribosyl)imidazole-4-carboxylate: step 1/2. This Nitrosococcus oceani (strain ATCC 19707 / BCRC 17464 / JCM 30415 / NCIMB 11848 / C-107) protein is Phosphoribosylaminoimidazole-succinocarboxamide synthase.